We begin with the raw amino-acid sequence, 364 residues long: Fructose-bisphosphate aldolase C (364 aa).

Y5 is modified (phosphotyrosine). Residues S36, S39, and S45 each carry the phosphoserine modification. R56 lines the substrate pocket. An N6-acetyllysine modification is found at K111. Phosphoserine is present on S132. K147 is a binding site for substrate. The active-site Proton acceptor is E188. K230 (schiff-base intermediate with dihydroxyacetone-P) is an active-site residue.

It belongs to the class I fructose-bisphosphate aldolase family. As to quaternary structure, homotetramer. Interacts with ATP6V1E1.

It catalyses the reaction beta-D-fructose 1,6-bisphosphate = D-glyceraldehyde 3-phosphate + dihydroxyacetone phosphate. The protein operates within carbohydrate degradation; glycolysis; D-glyceraldehyde 3-phosphate and glycerone phosphate from D-glucose: step 4/4. This chain is Fructose-bisphosphate aldolase C (ALDOC), found in Macaca fascicularis (Crab-eating macaque).